An 874-amino-acid chain; its full sequence is Bifunctional apolipoprotein N-acyltransferase/polyprenol monophosphomannose synthase (874 aa).

An apolipoprotein N-acyltransferase region spans residues 1–593 (MKLGAWVAAQ…GRHRATSRSY (593 aa)). The next 5 membrane-spanning stretches (helical) occupy residues 23–42 (TRLV…FPPR), 72–89 (YGLL…PWIG), 94–115 (PGPW…GLFA), 177–194 (VALV…IEKW), and 206–223 (AVVL…AAIV). Residues 241 to 497 (VTVAVVQGNV…PAYLDSQVRL (257 aa)) form the CN hydrolase domain. Glutamate 294 acts as the Proton acceptor in catalysis. Lysine 359 is a catalytic residue. The active-site Nucleophile is the cysteine 409. A helical transmembrane segment spans residues 509-526 (PILQWILVGAAAAVVLVA). 2 disordered regions span residues 533-609 (FPRP…NRPS) and 852-874 (RARP…DVTE). A polyprenol monophosphomannose synthase region spans residues 594–874 (MTTGQPAPPA…SRVSRADVTE (281 aa)).

It in the N-terminal section; belongs to the CN hydrolase family. Apolipoprotein N-acyltransferase subfamily. This sequence in the C-terminal section; belongs to the glycosyltransferase 2 family.

It localises to the cell membrane. It catalyses the reaction N-terminal S-1,2-diacyl-sn-glyceryl-L-cysteinyl-[lipoprotein] + a glycerophospholipid = N-acyl-S-1,2-diacyl-sn-glyceryl-L-cysteinyl-[lipoprotein] + a 2-acyl-sn-glycero-3-phospholipid + H(+). The enzyme catalyses a di-trans,poly-cis-dolichyl phosphate + GDP-alpha-D-mannose = a di-trans,poly-cis-dolichyl beta-D-mannosyl phosphate + GDP. It participates in protein modification; lipoprotein biosynthesis (N-acyl transfer). In terms of biological role, catalyzes the phospholipid dependent N-acylation of the N-terminal cysteine of apolipoprotein, the last step in lipoprotein maturation. Functionally, transfers mannose from GDP-mannose to lipid acceptors to form polyprenol monophosphomannose (PPM). PMM is an alkai-stable sugar donor which adds mannose-phosphate residues to triacylated-phosphatidyl-myo-inositol mannosides (PIM2), eventually leading to generation of the cell wall glycolipid lipoglycan modulins lipoarabinomannan (LAM) and lipomannan (LM). In Mycobacterium bovis (strain BCG / Pasteur 1173P2), this protein is Bifunctional apolipoprotein N-acyltransferase/polyprenol monophosphomannose synthase.